Reading from the N-terminus, the 399-residue chain is MVKLFKQETTTVGVEADVTSSRGCPAAAQAPDVSGALISGVPVSAPLVLSIDAMGGDRGPAAVLDGIALARRKYPDLHFLVHGPEADVAPLVKARRLKSCVTIRHATGVVTMHDKPAAVMRGGKDTSMWSTIDAVRDGAAQVAVSCGNTGALMAVSMLRLRKMPGVNRPAIAAFWPCKNPSGFNIMLDMGADVKAEARDLLTYALMGSSYARNALGLDRPRVGLLNVGTEEHKGHAELKIAAEMIGAMETAGGYEFVGFVEGNDLPGSRVDVIVTDGFTGNVALKTGEGTAKFAGELMREAFTSSLLSKLGALLASGALKRLKAKIDPRRVNGGVFLGLNGTVIKSHGGADATGVAAAIDLAARLAGLGFAERLAARVALASANGQDAASAEAGIENAK.

This sequence belongs to the PlsX family. Homodimer. Probably interacts with PlsY.

Its subcellular location is the cytoplasm. The enzyme catalyses a fatty acyl-[ACP] + phosphate = an acyl phosphate + holo-[ACP]. It functions in the pathway lipid metabolism; phospholipid metabolism. Catalyzes the reversible formation of acyl-phosphate (acyl-PO(4)) from acyl-[acyl-carrier-protein] (acyl-ACP). This enzyme utilizes acyl-ACP as fatty acyl donor, but not acyl-CoA. The chain is Phosphate acyltransferase from Rhodobacter capsulatus (Rhodopseudomonas capsulata).